Here is a 162-residue protein sequence, read N- to C-terminus: Blue copper protein 1b (162 aa).

Positions methionine 1–alanine 23 are cleaved as a signal peptide. Residues threonine 25–alanine 125 enclose the Phytocyanin domain. Cu cation is bound at residue histidine 65. Asparagine 71 carries N-linked (GlcNAc...) asparagine glycosylation. Cysteine 78 and cysteine 112 are disulfide-bonded. The Cu cation site is built by cysteine 106, histidine 111, and methionine 117. The chain crosses the membrane as a helical span at residues valine 142–alanine 162.

The protein resides in the membrane. This is Blue copper protein 1b from Medicago truncatula (Barrel medic).